The following is a 208-amino-acid chain: Methylthioribulose-1-phosphate dehydratase (208 aa).

Residues His99 and His101 each contribute to the Zn(2+) site.

This sequence belongs to the aldolase class II family. MtnB subfamily. It depends on Zn(2+) as a cofactor.

The enzyme catalyses 5-(methylsulfanyl)-D-ribulose 1-phosphate = 5-methylsulfanyl-2,3-dioxopentyl phosphate + H2O. It functions in the pathway amino-acid biosynthesis; L-methionine biosynthesis via salvage pathway; L-methionine from S-methyl-5-thio-alpha-D-ribose 1-phosphate: step 2/6. Catalyzes the dehydration of methylthioribulose-1-phosphate (MTRu-1-P) into 2,3-diketo-5-methylthiopentyl-1-phosphate (DK-MTP-1-P). The protein is Methylthioribulose-1-phosphate dehydratase of Aquifex aeolicus (strain VF5).